Consider the following 608-residue polypeptide: MEEEKVRVRLVFEDRRILSKYQKKQGLTRSWVVLNRKCHRTISEFSDHIFHTFSLCEACPHGLSLSMEGFVLPPFESSCVLKDKDIVCVKKKKESLLEIVGEDSDENVYNAIEVEERPQIRPGEMLLANEEFQKETGGYESESEEDELEEEAEEFVPEKKASKKRKTSSKNQSTKRKKCKLDTTEESPDERENTAVVSNVVKKKKKKKSLDVQSANNDEQNNDSTKPMTKSKRSSQQEESKEHNDLCQLSAETKKTPSRSARRKKAKRQWLREKTKLEKEELLQTQLVVAPSQKPVITIDHQATKEKHCETLENQQAEEVSDGFGDEVVPVEVRPGHIRFKPLAGTDEASLDSEPLVENVLWNGNMTKKKGQKWGTEKSGFSKRYAQDFNEDATTQPAEAETLANCPIDYEQLVAYTGSVKKGDVIAYRLIELTSSWTPEVSSFRVGKISYYDPDSKMVTLMPVQEFPIEKKTEEDDDFCMQPDTSLYKEDGSLEIEFSALLDVRSVKTSSSDSAEVAKSALPEPDQSAKKPKLSANKELQTPAKENGEVSPWEELSEALSAKKAALSQANNGWNKKGSSSGGSWSYKALRGSAMGPVMNYLRSQKEI.

The interval 134-272 (KETGGYESES…RKKAKRQWLR (139 aa)) is disordered. Residues 141–155 (SESEEDELEEEAEEF) are compositionally biased toward acidic residues. Basic residues predominate over residues 161-179 (ASKKRKTSSKNQSTKRKKC). Residues 163-170 (KKRKTSSK) carry the Nuclear localization signal 1 motif. S187 is modified (phosphoserine). The segment covering 211–228 (DVQSANNDEQNNDSTKPM) has biased composition (polar residues). Basic and acidic residues predominate over residues 235–245 (SQQEESKEHND). The short motif at 253–260 (TKKTPSRS) is the Nuclear localization signal 2 element. Basic residues predominate over residues 256–269 (TPSRSARRKKAKRQ). In terms of domain architecture, Tudor; atypical spans 410-510 (YEQLVAYTGS…LLDVRSVKTS (101 aa)). The segment at 513–585 (DSAEVAKSAL…KKGSSSGGSW (73 aa)) is disordered. Positions 558–585 (EALSAKKAALSQANNGWNKKGSSSGGSW) are enriched in low complexity.

This sequence belongs to the coilin family. Homooligomer. Interaction with RNA results in multimerization due to structural alteration in the NOD domain.

The protein localises to the nucleus. The protein resides in the cajal body. Probable component of nuclear coiled bodies, also known as Cajal bodies or CBs, which are involved in the modification and assembly of nucleoplasmic snRNPs. Required for CBs formation. Binds snRNAs and non-specific artificial RNA via the N-terminal part of the NOD domain and via the NLS2 region (212-282) of the IDD domain. The two sites are able to function independently and provide effective RNA-binding in a non-cooperative manner. This is Coilin from Arabidopsis thaliana (Mouse-ear cress).